Consider the following 723-residue polypeptide: Fatty acid oxidation complex subunit alpha (723 aa).

An enoyl-CoA hydratase/isomerase region spans residues 1–189 (MIYQANTLQV…KVGLLDAIVE (189 aa)). Asp-296 contacts substrate. The segment at 311 to 723 (NKATERAAVL…FYDGQQASSL (413 aa)) is 3-hydroxyacyl-CoA dehydrogenase. Residues Met-325, Asp-344, 401-403 (VVE), Lys-408, and Ser-430 each bind NAD(+). His-451 (for 3-hydroxyacyl-CoA dehydrogenase activity) is an active-site residue. Residue Asn-454 participates in NAD(+) binding. Substrate-binding residues include Asn-501 and Tyr-661.

In the N-terminal section; belongs to the enoyl-CoA hydratase/isomerase family. The protein in the C-terminal section; belongs to the 3-hydroxyacyl-CoA dehydrogenase family. Heterotetramer of two alpha chains (FadB) and two beta chains (FadA).

It catalyses the reaction a (3S)-3-hydroxyacyl-CoA + NAD(+) = a 3-oxoacyl-CoA + NADH + H(+). It carries out the reaction a (3S)-3-hydroxyacyl-CoA = a (2E)-enoyl-CoA + H2O. The enzyme catalyses a 4-saturated-(3S)-3-hydroxyacyl-CoA = a (3E)-enoyl-CoA + H2O. The catalysed reaction is (3S)-3-hydroxybutanoyl-CoA = (3R)-3-hydroxybutanoyl-CoA. It catalyses the reaction a (3Z)-enoyl-CoA = a 4-saturated (2E)-enoyl-CoA. It carries out the reaction a (3E)-enoyl-CoA = a 4-saturated (2E)-enoyl-CoA. It participates in lipid metabolism; fatty acid beta-oxidation. Functionally, involved in the aerobic and anaerobic degradation of long-chain fatty acids via beta-oxidation cycle. Catalyzes the formation of 3-oxoacyl-CoA from enoyl-CoA via L-3-hydroxyacyl-CoA. It can also use D-3-hydroxyacyl-CoA and cis-3-enoyl-CoA as substrate. This chain is Fatty acid oxidation complex subunit alpha, found in Vibrio atlanticus (strain LGP32) (Vibrio splendidus (strain Mel32)).